A 1035-amino-acid polypeptide reads, in one-letter code: Calcium-transporting ATPase 7, plasma membrane-type (1035 aa).

Residues 1–166 lie on the Cytoplasmic side of the membrane; that stretch reads MECADYFIGS…KGFFRHVWDA (166 aa). The chain crosses the membrane as a helical span at residues 167–187; the sequence is LADVFLIVLLVCAAVSLAFGI. Residues 188-194 lie on the Extracellular side of the membrane; it reads KEHGIKD. A helical membrane pass occupies residues 195–215; sequence GWYDGVSIFLAVFLVAAVSAV. The Cytoplasmic portion of the chain corresponds to 216–348; sequence SNHSQGKRFD…DPTPLQERLE (133 aa). Residues 349-369 traverse the membrane as a helical segment; the sequence is GLTSSIGKVGIAVAVLVFAVL. Topologically, residues 370–395 are extracellular; the sequence is TARHFTGSTRDEQGNALFDKRNVTFN. N-linked (GlcNAc...) asparagine glycosylation is present at Asn-391. Residues 396 to 416 traverse the membrane as a helical segment; the sequence is AVFSGLVGIFQQAVTIIVVAI. The Cytoplasmic segment spans residues 417–818; the sequence is PEGLPLAVTL…GRCVYNNIQK (402 aa). The active-site 4-aspartylphosphate intermediate is the Asp-460. Residues Asp-761 and Asp-765 each coordinate Mg(2+). Residues 819–839 form a helical membrane-spanning segment; it reads FIQFQLTVNVAALVINFVSAV. Residues 840-845 lie on the Extracellular side of the membrane; that stretch reads TTGRMP. Residues 846 to 866 form a helical membrane-spanning segment; sequence LTTVQLLWVNLIMDTMGALAL. The Cytoplasmic portion of the chain corresponds to 867–887; that stretch reads ATDTPTAGLMRRPPIGRAAPL. A helical membrane pass occupies residues 888-910; it reads ISNAMWRNLAAQAAYQVAVLLAL. The Extracellular portion of the chain corresponds to 911-919; that stretch reads QYRGFGGAG. A helical membrane pass occupies residues 920–940; it reads AGERANGTMIFNAFVLCQVFN. Residues 941–960 lie on the Cytoplasmic side of the membrane; that stretch reads EFNAREIERRNVFAGVHRNR. Residues 961 to 981 traverse the membrane as a helical segment; that stretch reads MFLGIVAVTVALQVVMVELLT. The Extracellular segment spans residues 982-990; that stretch reads KFAGTERLG. A helical membrane pass occupies residues 991-1011; sequence WGQWGACVGIAAVSWPIGWAV. The Cytoplasmic segment spans residues 1012–1035; that stretch reads KCIPVPERPFHEIITARRRRRRST.

Belongs to the cation transport ATPase (P-type) (TC 3.A.3) family. Type IIB subfamily.

It localises to the golgi apparatus membrane. It catalyses the reaction Ca(2+)(in) + ATP + H2O = Ca(2+)(out) + ADP + phosphate + H(+). With respect to regulation, activated by calmodulin. Functionally, this magnesium-dependent enzyme catalyzes the hydrolysis of ATP coupled with the translocation of calcium from the cytosol out of the cell, into the endoplasmic reticulum, or into organelles. Involved in salt stress tolerance. The polypeptide is Calcium-transporting ATPase 7, plasma membrane-type (Oryza sativa subsp. japonica (Rice)).